The chain runs to 213 residues: Probable elongation factor 1-beta/1-delta 1 (213 aa).

It belongs to the EF-1-beta/EF-1-delta family. EF-1 is composed of 4 subunits: alpha, beta, delta, and gamma.

EF-1-beta and EF-1-delta stimulate the exchange of GDP bound to EF-1-alpha to GTP. The chain is Probable elongation factor 1-beta/1-delta 1 (eef-1B.1) from Caenorhabditis elegans.